The following is a 437-amino-acid chain: UDP-glucuronate 4-epimerase 4 (437 aa).

A helical transmembrane segment spans residues 30-50 (SLTKFAFFSFFLLCLISLLFL). Residues 56–76 (INPSSPSDPSRRSLRTNTYGG) are disordered. Residues 96-116 (GITVLVTGAAGFVGTHVSAAL) traverse the membrane as a helical segment. 98 to 129 (TVLVTGAAGFVGTHVSAALKRRGDGVIGLDNF) serves as a coordination point for NAD(+). Catalysis depends on tyrosine 248, which acts as the Proton acceptor.

Belongs to the NAD(P)-dependent epimerase/dehydratase family. As to quaternary structure, homodimer. In roots, leaves, siliques, flowers, pollen and stems.

Its subcellular location is the golgi apparatus. The protein resides in the golgi stack membrane. The catalysed reaction is UDP-alpha-D-glucuronate = UDP-alpha-D-galacturonate. Activated by glycerol, not effected by dimethyl sulfoxide and inhibited by high concentration of monovalent salts, UDP-xylose, UDP-arabinose or UDP. Its function is as follows. Involved in the synthesis of the negatively charged monosaccharide that forms the backbone of pectic cell wall components. The polypeptide is UDP-glucuronate 4-epimerase 4 (GAE4) (Arabidopsis thaliana (Mouse-ear cress)).